A 682-amino-acid polypeptide reads, in one-letter code: Probable glycosyl transferase Gly (682 aa).

UDP is bound by residues 21-26 (CASFSD) and 112-113 (DC). Positions 112, 114, and 230 each coordinate Mn(2+). 230–236 (HYLPERK) is a binding site for UDP.

This sequence belongs to the glycosyltransferase 8 family. As to quaternary structure, part of the accessory SecA2/SecY2 protein translocation apparatus required to export cell wall protein GspB.

Functionally, part of the accessory SecA2/SecY2 system specifically required to export GspB, a serine-rich repeat cell wall protein encoded upstream in the same operon. This Streptococcus gordonii protein is Probable glycosyl transferase Gly (gly).